Here is a 203-residue protein sequence, read N- to C-terminus: tRNA (pseudouridine(54)-N(1))-methyltransferase (203 aa).

S-adenosyl-L-methionine is bound by residues leucine 125, glycine 146, and cysteine 179.

This sequence belongs to the methyltransferase superfamily. TrmY family. In terms of assembly, homodimer.

It localises to the cytoplasm. It catalyses the reaction pseudouridine(54) in tRNA + S-adenosyl-L-methionine = N(1)-methylpseudouridine(54) in tRNA + S-adenosyl-L-homocysteine + H(+). Functionally, specifically catalyzes the N1-methylation of pseudouridine at position 54 (Psi54) in tRNAs. This Methanopyrus kandleri (strain AV19 / DSM 6324 / JCM 9639 / NBRC 100938) protein is tRNA (pseudouridine(54)-N(1))-methyltransferase.